Here is a 540-residue protein sequence, read N- to C-terminus: Cytosolic carboxypeptidase 6 (540 aa).

Residues 167 to 438 (YPYTYTRFQH…NVARTFLDYY (272 aa)) enclose the Peptidase M14 domain. Zn(2+)-binding residues include H230, E233, and H328. E401 acts as the Proton donor/acceptor in catalysis.

This sequence belongs to the peptidase M14 family. In terms of assembly, interacts with MYLK. It depends on Zn(2+) as a cofactor. As to expression, widely expressed. Expressed abundantly in testis, pituitary and brain and to a lower extent in eye, stomach, adrenal and kidney. In brain, expressed at low level in cerebellum as compared to cortex.

The protein localises to the cytoplasm. It is found in the cytosol. It localises to the cytoskeleton. Its subcellular location is the microtubule organizing center. The protein resides in the centrosome. The protein localises to the centriole. It is found in the golgi apparatus. It localises to the cilium basal body. The catalysed reaction is (L-glutamyl)(n+1)-gamma-L-glutamyl-L-glutamyl-[protein] + H2O = (L-glutamyl)(n)-gamma-L-glutamyl-L-glutamyl-[protein] + L-glutamate. The enzyme catalyses C-terminal L-alpha-aminoacyl-L-glutamyl-L-glutamyl-[tubulin] + H2O = C-terminal L-alpha-aminoacyl-L-glutamyl-[tubulin] + L-glutamate. Metallocarboxypeptidase that mediates protein deglutamylation of tubulin and non-tubulin target proteins. Catalyzes the removal of polyglutamate side chains present on the gamma-carboxyl group of glutamate residues within the C-terminal tail of tubulin protein. Specifically cleaves tubulin long-side-chains, while it is not able to remove the branching point glutamate. Also catalyzes the removal of polyglutamate residues from the carboxy-terminus of non-tubulin proteins such as MYLK. Mediates the deglutamylation of nucleotidyltransferase CGAS, leading to CGAS antiviral defense response activation. Involved in KLF4 deglutamylation which promotes KLF4 proteasome-mediated degradation, thereby negatively regulating cell pluripotency maintenance and embryogenesis. In Mus musculus (Mouse), this protein is Cytosolic carboxypeptidase 6.